Here is a 332-residue protein sequence, read N- to C-terminus: DNA-directed RNA polymerase subunit alpha (332 aa).

The interval threonine 2–threonine 234 is alpha N-terminal domain (alpha-NTD). The alpha C-terminal domain (alpha-CTD) stretch occupies residues valine 248 to glycine 332.

Belongs to the RNA polymerase alpha chain family. Homodimer. The RNAP catalytic core consists of 2 alpha, 1 beta, 1 beta' and 1 omega subunit. When a sigma factor is associated with the core the holoenzyme is formed, which can initiate transcription.

The enzyme catalyses RNA(n) + a ribonucleoside 5'-triphosphate = RNA(n+1) + diphosphate. Functionally, DNA-dependent RNA polymerase catalyzes the transcription of DNA into RNA using the four ribonucleoside triphosphates as substrates. The polypeptide is DNA-directed RNA polymerase subunit alpha (Xanthomonas axonopodis pv. citri (strain 306)).